A 35-amino-acid polypeptide reads, in one-letter code: Photosystem II reaction center protein M (35 aa).

A helical membrane pass occupies residues 7–27 (GFIASILFVLVPTVFLLILFI).

The protein belongs to the PsbM family. As to quaternary structure, PSII is composed of 1 copy each of membrane proteins PsbA, PsbB, PsbC, PsbD, PsbE, PsbF, PsbH, PsbI, PsbJ, PsbK, PsbL, PsbM, PsbT, PsbX, PsbY, PsbZ, Psb30/Ycf12, peripheral proteins PsbO, CyanoQ (PsbQ), PsbU, PsbV and a large number of cofactors. It forms dimeric complexes.

The protein resides in the cellular thylakoid membrane. One of the components of the core complex of photosystem II (PSII). PSII is a light-driven water:plastoquinone oxidoreductase that uses light energy to abstract electrons from H(2)O, generating O(2) and a proton gradient subsequently used for ATP formation. It consists of a core antenna complex that captures photons, and an electron transfer chain that converts photonic excitation into a charge separation. This subunit is found at the monomer-monomer interface. This is Photosystem II reaction center protein M from Microcystis aeruginosa (strain NIES-843 / IAM M-2473).